Reading from the N-terminus, the 426-residue chain is Phosphoribosylamine--glycine ligase (426 aa).

The region spanning Lys107 to Asn313 is the ATP-grasp domain. Leu133 to Ser194 lines the ATP pocket. Residues Glu283 and Asn285 each coordinate Mg(2+).

This sequence belongs to the GARS family. The cofactor is Mg(2+). Mn(2+) serves as cofactor.

It catalyses the reaction 5-phospho-beta-D-ribosylamine + glycine + ATP = N(1)-(5-phospho-beta-D-ribosyl)glycinamide + ADP + phosphate + H(+). Its pathway is purine metabolism; IMP biosynthesis via de novo pathway; N(1)-(5-phospho-D-ribosyl)glycinamide from 5-phospho-alpha-D-ribose 1-diphosphate: step 2/2. This Fusobacterium nucleatum subsp. nucleatum (strain ATCC 25586 / DSM 15643 / BCRC 10681 / CIP 101130 / JCM 8532 / KCTC 2640 / LMG 13131 / VPI 4355) protein is Phosphoribosylamine--glycine ligase.